The primary structure comprises 178 residues: ATP synthase subunit delta (178 aa).

This sequence belongs to the ATPase delta chain family. F-type ATPases have 2 components, F(1) - the catalytic core - and F(0) - the membrane proton channel. F(1) has five subunits: alpha(3), beta(3), gamma(1), delta(1), epsilon(1). F(0) has three main subunits: a(1), b(2) and c(10-14). The alpha and beta chains form an alternating ring which encloses part of the gamma chain. F(1) is attached to F(0) by a central stalk formed by the gamma and epsilon chains, while a peripheral stalk is formed by the delta and b chains.

The protein localises to the cell inner membrane. Functionally, f(1)F(0) ATP synthase produces ATP from ADP in the presence of a proton or sodium gradient. F-type ATPases consist of two structural domains, F(1) containing the extramembraneous catalytic core and F(0) containing the membrane proton channel, linked together by a central stalk and a peripheral stalk. During catalysis, ATP synthesis in the catalytic domain of F(1) is coupled via a rotary mechanism of the central stalk subunits to proton translocation. In terms of biological role, this protein is part of the stalk that links CF(0) to CF(1). It either transmits conformational changes from CF(0) to CF(1) or is implicated in proton conduction. The protein is ATP synthase subunit delta of Pseudomonas fluorescens (strain ATCC BAA-477 / NRRL B-23932 / Pf-5).